We begin with the raw amino-acid sequence, 403 residues long: MSHRKFSAPRHGSLGFLPRKRSSRHRGKVKSFPKDDSSKPVHLTAFLGYKAGMTHIVREVDRPGSKVNKKEVVEAVTIVETPPMVIVGIVGYVETPRGLRTFKTIFAEHISDECKRRFYKNWHKSKKKAFTKYCKKWQDEDGKKQLERDFSSMKKYCQVIRVIAHTQMRLLPLRQKKAHLMEIQVNGGTVAEKLDWARERLEQQVPVNQVFGQDEMIDVIGVTKGKGYKGVTSRWHTKKLPRKTHRGLRKVACIGAWHPARVAFSVARAGQKGYHHRTEINKKIYKIGQGYLIKDGKLIKNNASTDYDLSDKSINPLGGFVHYGEVTNDFVMLKGCVVGTKKRVLTLRKSLLVQTKRRALEKIDLKFIDTTSKFGHGRFQTVEEKKAFMGPLKKDRIAKEEGA.

The segment at 1–38 (MSHRKFSAPRHGSLGFLPRKRSSRHRGKVKSFPKDDSS) is disordered. Ser13 bears the Phosphoserine mark. Over residues 18 to 31 (PRKRSSRHRGKVKS) the composition is skewed to basic residues. Lys39 participates in a covalent cross-link: Glycyl lysine isopeptide (Lys-Gly) (interchain with G-Cter in SUMO2). At Lys136 the chain carries N6-acetyllysine. Residues Lys224 and Lys226 each participate in a glycyl lysine isopeptide (Lys-Gly) (interchain with G-Cter in SUMO2) cross-link. His245 is modified (tele-methylhistidine). Lys286 and Lys294 each carry N6-acetyllysine; alternate. Residue Lys286 forms a Glycyl lysine isopeptide (Lys-Gly) (interchain with G-Cter in SUMO2); alternate linkage. Residue Lys294 forms a Glycyl lysine isopeptide (Lys-Gly) (interchain with G-Cter in SUMO1); alternate linkage. Phosphoserine is present on Ser304. Lys366 carries the post-translational modification N6-acetyllysine; alternate. Residue Lys366 forms a Glycyl lysine isopeptide (Lys-Gly) (interchain with G-Cter in SUMO2); alternate linkage. Lys373 carries the post-translational modification N6-acetyllysine. Glycyl lysine isopeptide (Lys-Gly) (interchain with G-Cter in SUMO2) cross-links involve residues Lys386, Lys393, and Lys399.

This sequence belongs to the universal ribosomal protein uL3 family. As to quaternary structure, component of the large ribosomal subunit. Interacts with DHX33. Constitutively monomethylated at His-245 by METTL18. Methylation at His-245 regulates translation elongation by slowing ribosome traversal on tyrosine codons: slower elongation provides enough time for proper folding of synthesized proteins and prevents cellular aggregation of tyrosine-rich proteins It is not required for incorporation of RPL3 into ribosomes.

It is found in the nucleus. It localises to the nucleolus. Its subcellular location is the cytoplasm. Functionally, component of the large ribosomal subunit. The ribosome is a large ribonucleoprotein complex responsible for the synthesis of proteins in the cell. The sequence is that of Large ribosomal subunit protein uL3 (RPL3) from Sus scrofa (Pig).